A 317-amino-acid chain; its full sequence is Glycerol-3-phosphate dehydrogenase [NAD(P)+] (317 aa).

4 residues coordinate NADPH: Trp-20, Arg-40, Arg-41, and Lys-88. 2 residues coordinate sn-glycerol 3-phosphate: Lys-88 and Gly-116. Ser-120 is an NADPH binding site. Sn-glycerol 3-phosphate contacts are provided by Lys-171, Asp-224, Ser-234, Arg-235, and Asn-236. Residue Lys-171 is the Proton acceptor of the active site. Residue Arg-235 participates in NADPH binding. Glu-261 is a binding site for NADPH.

This sequence belongs to the NAD-dependent glycerol-3-phosphate dehydrogenase family.

It is found in the cytoplasm. It catalyses the reaction sn-glycerol 3-phosphate + NAD(+) = dihydroxyacetone phosphate + NADH + H(+). The enzyme catalyses sn-glycerol 3-phosphate + NADP(+) = dihydroxyacetone phosphate + NADPH + H(+). Its pathway is membrane lipid metabolism; glycerophospholipid metabolism. Catalyzes the reduction of the glycolytic intermediate dihydroxyacetone phosphate (DHAP) to sn-glycerol 3-phosphate (G3P), the key precursor for phospholipid synthesis. The chain is Glycerol-3-phosphate dehydrogenase [NAD(P)+] from Synechocystis sp. (strain ATCC 27184 / PCC 6803 / Kazusa).